Consider the following 365-residue polypeptide: MTENHYLLLTPGPLTTTKTVKEVMLYDWCTWDVEYNTMVQDVRAKLVSLATKEEEKYTTVLMQGSGTFSVEAVIGSVIPKNGKLLVCTNGAYGKRIVQMAEMLHIDVVVSQTEEWEPTNVVEVEKILQQDKEITHIAIVHCETTTGIINPIVDVCKLGKQYGKVTLVDAMSSFGGIEIDIAELQIDFLISSANKCIQGVPGFGFVIAKRDELLKCKGQARSLSLDLYDQWETMENQNGKWRFTSPTHVVHAFYQALLELEKEGGVKARYNRYDNNQKLLVNRMREIGFKPLVDEKYQSPIITSFIYPEEWFDFEQLYNELKRDGFVIYPGKISKVDTFRIGNIGDVHEADINRLVDSIAKGVVIG.

Lys-194 carries the post-translational modification N6-(pyridoxal phosphate)lysine.

Belongs to the class-V pyridoxal-phosphate-dependent aminotransferase family. PhnW subfamily. In terms of assembly, homodimer. The cofactor is pyridoxal 5'-phosphate.

The catalysed reaction is (2-aminoethyl)phosphonate + pyruvate = phosphonoacetaldehyde + L-alanine. In terms of biological role, involved in phosphonate degradation. This is 2-aminoethylphosphonate--pyruvate transaminase from Bacillus cereus (strain ATCC 10987 / NRS 248).